The sequence spans 149 residues: Transcriptional regulator MraZ (149 aa).

SpoVT-AbrB domains lie at 7–54 and 83–126; these read KYVN…GISH and AVQL…QPQN.

This sequence belongs to the MraZ family. In terms of assembly, forms oligomers.

Its subcellular location is the cytoplasm. It localises to the nucleoid. The sequence is that of Transcriptional regulator MraZ from Rickettsia peacockii (strain Rustic).